Here is a 743-residue protein sequence, read N- to C-terminus: MTISNTRPITPDLIASHGLKPDEYERILNLIGREPTFTELGIFSAMWNEHCSYKSSKKWLRTLPTKGPRVIQGPGENAGVVDIDDGDCVVFKMESHNHPSYIEPYQGAATGVGGILRDVFTMGARPVAAMNALRFGSPDHPKTRHLVSGVVAGVGGYGNSFGVPTVGGEVEFDARYNGNILVNAFAAGLAKTDAIFYSKAEGVGLPVVYLGAKTGRDGVGGATMASAEFDESIEEKRPTVQVGDPFTEKCLLEACLELMQTGAVIAIQDMGAAGLTCSAVEMGAKGDLGIELDLDKVPVREERMTAYEMMLSESQERMLMVLRPEKEEEAKAIFVKWGLDFAIVGKTTDDLRFRILHQGEEVANLPIKELGDEAPEYDRPWTPARAPSPLATNDVPQADVSDALLKLVGSANNSSRRWVYEQYDTLIQGNSLQLPGGDAGVIRVEGHETKALAFSSDVTPRYVEADPFEGGKQAVAECWRNLTATGALPLAATDNLNFGNPERPEIMSQLVHAIKGIGEACQALDFPIVSGNVSLYNETNGQAILPTPTIGGVGLVRDWSKMARIRFAAANETILLAGAPESWGTHIGQSVYMRDIHGRTDGPAPHVDLGHERKVGDFVRGLIEDGLVTAVHDCSSGGLALAVAEMAIASGIGATIDAPAEHDPIPVFYGEDQGRYVVTVAEGSAETVAARAKAAGVALPVIGRTGGNAVQLGDARPVSVDELRSAHEAWFPNYMGGDLAPDN.

Histidine 50 is a catalytic residue. ATP-binding residues include tyrosine 53 and lysine 92. Position 94 (glutamate 94) interacts with Mg(2+). Residues 95 to 98 and arginine 117 contribute to the substrate site; that span reads SHNH. Histidine 96 acts as the Proton acceptor in catalysis. Aspartate 118 provides a ligand contact to Mg(2+). Residue glutamine 241 coordinates substrate. Aspartate 269 is a binding site for Mg(2+). 313–315 contacts substrate; that stretch reads ESQ. Aspartate 494 and glycine 531 together coordinate ATP. Position 532 (asparagine 532) interacts with Mg(2+). Serine 534 contacts substrate.

Belongs to the FGAMS family. Monomer. Part of the FGAM synthase complex composed of 1 PurL, 1 PurQ and 2 PurS subunits.

The protein resides in the cytoplasm. It carries out the reaction N(2)-formyl-N(1)-(5-phospho-beta-D-ribosyl)glycinamide + L-glutamine + ATP + H2O = 2-formamido-N(1)-(5-O-phospho-beta-D-ribosyl)acetamidine + L-glutamate + ADP + phosphate + H(+). It participates in purine metabolism; IMP biosynthesis via de novo pathway; 5-amino-1-(5-phospho-D-ribosyl)imidazole from N(2)-formyl-N(1)-(5-phospho-D-ribosyl)glycinamide: step 1/2. Functionally, part of the phosphoribosylformylglycinamidine synthase complex involved in the purines biosynthetic pathway. Catalyzes the ATP-dependent conversion of formylglycinamide ribonucleotide (FGAR) and glutamine to yield formylglycinamidine ribonucleotide (FGAM) and glutamate. The FGAM synthase complex is composed of three subunits. PurQ produces an ammonia molecule by converting glutamine to glutamate. PurL transfers the ammonia molecule to FGAR to form FGAM in an ATP-dependent manner. PurS interacts with PurQ and PurL and is thought to assist in the transfer of the ammonia molecule from PurQ to PurL. This is Phosphoribosylformylglycinamidine synthase subunit PurL from Rhizobium meliloti (strain 1021) (Ensifer meliloti).